Here is a 128-residue protein sequence, read N- to C-terminus: uncharacterized protein (128 aa).

The span at 1 to 11 (MDNKKKEENPS) shows a compositional bias: basic and acidic residues. The segment at 1-40 (MDNKKKEENPSKSDTSISLPPSSTGEALQNYTESEWNASD) is disordered. A compositionally biased stretch (polar residues) spans 12-37 (KSDTSISLPPSSTGEALQNYTESEWN).

This is an uncharacterized protein from Caenorhabditis elegans.